A 431-amino-acid polypeptide reads, in one-letter code: Adenylosuccinate synthetase (431 aa).

Residues 13–19 and 41–43 contribute to the GTP site; these read GDEGKGK and GHT. Asp-14 serves as the catalytic Proton acceptor. The Mg(2+) site is built by Asp-14 and Gly-41. Residues 14-17, 39-42, Thr-130, Arg-144, Gln-225, Thr-240, and Arg-304 contribute to the IMP site; these read DEGK and NAGH. His-42 (proton donor) is an active-site residue. Substrate is bound at residue 300-306; that stretch reads AVTGRPR. Residues Arg-306, 332-334, and 415-417 each bind GTP; these read KLD and STG.

Belongs to the adenylosuccinate synthetase family. As to quaternary structure, homodimer. Requires Mg(2+) as cofactor.

Its subcellular location is the cytoplasm. It carries out the reaction IMP + L-aspartate + GTP = N(6)-(1,2-dicarboxyethyl)-AMP + GDP + phosphate + 2 H(+). It functions in the pathway purine metabolism; AMP biosynthesis via de novo pathway; AMP from IMP: step 1/2. Plays an important role in the de novo pathway of purine nucleotide biosynthesis. Catalyzes the first committed step in the biosynthesis of AMP from IMP. The chain is Adenylosuccinate synthetase from Legionella pneumophila (strain Paris).